The sequence spans 615 residues: DNA mismatch repair protein MutL (615 aa).

Positions 362-397 are disordered; it reads HFAEPAVREPVAPRYSPAPASGGRPAASWPNAQPGY. Residues 378 to 391 show a composition bias toward low complexity; it reads PAPASGGRPAASWP.

This sequence belongs to the DNA mismatch repair MutL/HexB family.

Functionally, this protein is involved in the repair of mismatches in DNA. It is required for dam-dependent methyl-directed DNA mismatch repair. May act as a 'molecular matchmaker', a protein that promotes the formation of a stable complex between two or more DNA-binding proteins in an ATP-dependent manner without itself being part of a final effector complex. This chain is DNA mismatch repair protein MutL, found in Escherichia fergusonii (strain ATCC 35469 / DSM 13698 / CCUG 18766 / IAM 14443 / JCM 21226 / LMG 7866 / NBRC 102419 / NCTC 12128 / CDC 0568-73).